The chain runs to 158 residues: Phosphopantetheine adenylyltransferase (158 aa).

Thr-10 lines the substrate pocket. Residues 10–11 (TF) and His-18 contribute to the ATP site. The substrate site is built by Lys-42, Leu-74, and Arg-88. ATP contacts are provided by residues 89–91 (GLR), Glu-99, and 124–130 (YSFISSS).

It belongs to the bacterial CoaD family. In terms of assembly, homohexamer. Requires Mg(2+) as cofactor.

It is found in the cytoplasm. The catalysed reaction is (R)-4'-phosphopantetheine + ATP + H(+) = 3'-dephospho-CoA + diphosphate. It functions in the pathway cofactor biosynthesis; coenzyme A biosynthesis; CoA from (R)-pantothenate: step 4/5. Functionally, reversibly transfers an adenylyl group from ATP to 4'-phosphopantetheine, yielding dephospho-CoA (dPCoA) and pyrophosphate. The chain is Phosphopantetheine adenylyltransferase from Erwinia tasmaniensis (strain DSM 17950 / CFBP 7177 / CIP 109463 / NCPPB 4357 / Et1/99).